A 364-amino-acid chain; its full sequence is MSLESIKYTRGSLEILDQLLLPLQTRYIKVRGVEDGWKVINKMQVRGAPAIAIVGCLSLAVELSPDNESSKKNMRQEIEGKLNYLVSARPTAVNIKLAADELINLANTLCADDSISAEIFKERFIGSIEDMLTKDIHDNKAIGSLGCEAILKNIDGDSPVRVLTHCNTGSLATAGYGTALGVIRSLHATKRLEHVFCTETRPYNQGARLTAYELVHEKIPSTLMVDSMVSALMHTRKIHAVIVGADRVAANGDTANKMGTYQIAIVAKYHDVPFYVAAPLTSIDMSLPYGEKIKIEERPDREMTHIGEHRIAAPGINCWNPSFDVTPASLIAGIITEKGVFAPDHLKSVKXHVTGKKYYNIIHI.

Asp-246 serves as the catalytic Proton donor.

This sequence belongs to the eIF-2B alpha/beta/delta subunits family. MtnA subfamily.

It localises to the cytoplasm. Its subcellular location is the nucleus. It catalyses the reaction 5-(methylsulfanyl)-alpha-D-ribose 1-phosphate = 5-(methylsulfanyl)-D-ribulose 1-phosphate. The protein operates within amino-acid biosynthesis; L-methionine biosynthesis via salvage pathway; L-methionine from S-methyl-5-thio-alpha-D-ribose 1-phosphate: step 1/6. Functionally, catalyzes the interconversion of methylthioribose-1-phosphate (MTR-1-P) into methylthioribulose-1-phosphate (MTRu-1-P). This Bombyx mori (Silk moth) protein is Methylthioribose-1-phosphate isomerase.